Here is a 263-residue protein sequence, read N- to C-terminus: 3-deoxy-manno-octulosonate cytidylyltransferase (263 aa).

Belongs to the KdsB family.

The protein localises to the cytoplasm. The enzyme catalyses 3-deoxy-alpha-D-manno-oct-2-ulosonate + CTP = CMP-3-deoxy-beta-D-manno-octulosonate + diphosphate. It functions in the pathway nucleotide-sugar biosynthesis; CMP-3-deoxy-D-manno-octulosonate biosynthesis; CMP-3-deoxy-D-manno-octulosonate from 3-deoxy-D-manno-octulosonate and CTP: step 1/1. It participates in bacterial outer membrane biogenesis; lipopolysaccharide biosynthesis. Activates KDO (a required 8-carbon sugar) for incorporation into bacterial lipopolysaccharide in Gram-negative bacteria. The polypeptide is 3-deoxy-manno-octulosonate cytidylyltransferase (Burkholderia vietnamiensis (strain G4 / LMG 22486) (Burkholderia cepacia (strain R1808))).